The following is a 117-amino-acid chain: Minor capsid protein p17 (117 aa).

Residue Asn12 is glycosylated (N-linked (GlcNAc...) asparagine; by host). The chain crosses the membrane as a helical span at residues 39-59; the sequence is AILLGILILLVIILIIVAIVY. The segment at 96–117 is disordered; the sequence is KNSTSQQSHIPSDEQLAELAHS. Asn97 carries an N-linked (GlcNAc...) asparagine; by host glycan.

This sequence belongs to the asfivirus minor capsid protein p17 family. As to quaternary structure, interacts with the minor capsid protein M1249L and with the hexon capsid protein p72 capsomers; these interactions form a rigid zipper structure that stabilizes the capsomers. Interacts with host STING1.

Its subcellular location is the virion membrane. The protein localises to the host endoplasmic reticulum membrane. In terms of biological role, together with the penton and the other minor capsid proteins (M1249L, p49), forms a complicated network immediately below the outer capsid shell, stabilizing the whole capsid. Three copies of p17 encircle each p72 capsomer in the inner capsid shell, anchoring p72 capsomers on the inner membrane. Required for the assembly of the capsid and icosahedral morphogenesis. Additionally, inhibits the host cGAS-STING pathway through its interaction with STING1 and subsequent interference of the recruitment of downstream components TBK1 and IKBKE. This chain is Minor capsid protein p17, found in African swine fever virus (isolate Tick/South Africa/Pretoriuskop Pr4/1996) (ASFV).